A 390-amino-acid chain; its full sequence is Phosphopentomutase (390 aa).

Positions 11, 283, 288, 324, 325, and 336 each coordinate Mn(2+).

It belongs to the phosphopentomutase family. Requires Mn(2+) as cofactor.

It is found in the cytoplasm. The catalysed reaction is 2-deoxy-alpha-D-ribose 1-phosphate = 2-deoxy-D-ribose 5-phosphate. It carries out the reaction alpha-D-ribose 1-phosphate = D-ribose 5-phosphate. Its pathway is carbohydrate degradation; 2-deoxy-D-ribose 1-phosphate degradation; D-glyceraldehyde 3-phosphate and acetaldehyde from 2-deoxy-alpha-D-ribose 1-phosphate: step 1/2. Its function is as follows. Isomerase that catalyzes the conversion of deoxy-ribose 1-phosphate (dRib-1-P) and ribose 1-phosphate (Rib-1-P) to deoxy-ribose 5-phosphate (dRib-5-P) and ribose 5-phosphate (Rib-5-P), respectively. The chain is Phosphopentomutase from Alkaliphilus oremlandii (strain OhILAs) (Clostridium oremlandii (strain OhILAs)).